The primary structure comprises 274 residues: Thiazole synthase (274 aa).

Catalysis depends on K111, which acts as the Schiff-base intermediate with DXP. 1-deoxy-D-xylulose 5-phosphate contacts are provided by residues G172, 198–199 (AG), and 220–221 (NS). The segment at 251–274 (RLPERAAASPSSPTTGIIAEAKTK) is disordered.

It belongs to the ThiG family. In terms of assembly, homotetramer. Forms heterodimers with either ThiH or ThiS.

Its subcellular location is the cytoplasm. It carries out the reaction [ThiS sulfur-carrier protein]-C-terminal-Gly-aminoethanethioate + 2-iminoacetate + 1-deoxy-D-xylulose 5-phosphate = [ThiS sulfur-carrier protein]-C-terminal Gly-Gly + 2-[(2R,5Z)-2-carboxy-4-methylthiazol-5(2H)-ylidene]ethyl phosphate + 2 H2O + H(+). It participates in cofactor biosynthesis; thiamine diphosphate biosynthesis. Functionally, catalyzes the rearrangement of 1-deoxy-D-xylulose 5-phosphate (DXP) to produce the thiazole phosphate moiety of thiamine. Sulfur is provided by the thiocarboxylate moiety of the carrier protein ThiS. In vitro, sulfur can be provided by H(2)S. The chain is Thiazole synthase from Prochlorococcus marinus (strain MIT 9313).